A 219-amino-acid polypeptide reads, in one-letter code: Histone H1.4 (219 aa).

Residues methionine 1–alanine 15 are compositionally biased toward low complexity. Positions methionine 1–serine 41 are disordered. Serine 2 carries the N-acetylserine modification. Residue serine 2 is modified to Phosphoserine. Residue lysine 17 is modified to N6-acetyllysine. Threonine 18 bears the Phosphothreonine mark. A compositionally biased stretch (basic residues) spans valine 20–alanine 35. An N6-acetyllysine; alternate modification is found at lysine 26. Lysine 26 bears the N6-methyllysine; alternate mark. At lysine 34 the chain carries N6-(beta-hydroxybutyryl)lysine; alternate. Lysine 34 is modified (N6-succinyllysine; alternate). The residue at position 36 (serine 36) is a Phosphoserine. In terms of domain architecture, H15 spans serine 36–lysine 109. Lysine 52 carries the post-translational modification N6-(beta-hydroxybutyryl)lysine. Citrulline is present on arginine 54. N6-(beta-hydroxybutyryl)lysine is present on residues lysine 64, lysine 85, lysine 90, and lysine 106. A disordered region spans residues glycine 91 to lysine 219. Residues lysine 119–lysine 140 are compositionally biased toward basic residues. Threonine 146 carries the post-translational modification Phosphothreonine. 2 stretches are compositionally biased toward basic residues: residues lysine 149–lysine 160 and lysine 168–proline 185. The residue at position 187 (serine 187) is a Phosphoserine. Positions lysine 192–lysine 219 are enriched in basic residues.

It belongs to the histone H1/H5 family. H1 histones are progressively phosphorylated during the cell cycle, becoming maximally phosphorylated during late G2 phase and M phase, and being dephosphorylated sharply thereafter. Post-translationally, acetylated at Lys-26. Deacetylated at Lys-26 by SIRT1. In terms of processing, citrullination at Arg-54 (H1R54ci) by PADI4 takes place within the DNA-binding site of H1 and results in its displacement from chromatin and global chromatin decondensation, thereby promoting pluripotency and stem cell maintenance.

The protein localises to the nucleus. It localises to the chromosome. Histone H1 protein binds to linker DNA between nucleosomes forming the macromolecular structure known as the chromatin fiber. Histones H1 are necessary for the condensation of nucleosome chains into higher-order structured fibers. Also acts as a regulator of individual gene transcription through chromatin remodeling, nucleosome spacing and DNA methylation. The protein is Histone H1.4 of Oryctolagus cuniculus (Rabbit).